Reading from the N-terminus, the 371-residue chain is N-acetyldiaminopimelate deacetylase (371 aa).

Residue D68 is part of the active site. The active-site Proton acceptor is E127.

It belongs to the peptidase M20A family. N-acetyldiaminopimelate deacetylase subfamily.

The catalysed reaction is N-acetyl-(2S,6S)-2,6-diaminopimelate + H2O = (2S,6S)-2,6-diaminopimelate + acetate. It functions in the pathway amino-acid biosynthesis; L-lysine biosynthesis via DAP pathway; LL-2,6-diaminopimelate from (S)-tetrahydrodipicolinate (acetylase route): step 3/3. Its function is as follows. Catalyzes the conversion of N-acetyl-diaminopimelate to diaminopimelate and acetate. The chain is N-acetyldiaminopimelate deacetylase from Listeria innocua serovar 6a (strain ATCC BAA-680 / CLIP 11262).